Consider the following 179-residue polypeptide: MARFQEFYRETVVPKLIEQFGYKSVMEVPRIQKITLNMGVGEAVADKKVMDHAVADMQKIAGQKPVVTKSKKSIAGFKIRENYPVGCMVTLRRGQMYEFLDRLVTVALPRVRDFRGVSGKSFDGRGNYNMGIKEQIIFPEIEYDKIDALRGMNITITTTAKTDDEARALLAAFSFPFKN.

The protein belongs to the universal ribosomal protein uL5 family. Part of the 50S ribosomal subunit; part of the 5S rRNA/L5/L18/L25 subcomplex. Contacts the 5S rRNA and the P site tRNA. Forms a bridge to the 30S subunit in the 70S ribosome.

In terms of biological role, this is one of the proteins that bind and probably mediate the attachment of the 5S RNA into the large ribosomal subunit, where it forms part of the central protuberance. In the 70S ribosome it contacts protein S13 of the 30S subunit (bridge B1b), connecting the 2 subunits; this bridge is implicated in subunit movement. Contacts the P site tRNA; the 5S rRNA and some of its associated proteins might help stabilize positioning of ribosome-bound tRNAs. The sequence is that of Large ribosomal subunit protein uL5 from Thiobacillus denitrificans (strain ATCC 25259 / T1).